We begin with the raw amino-acid sequence, 107 residues long: Nucleoid-associated protein RBE_0048 (107 aa).

The protein belongs to the YbaB/EbfC family. As to quaternary structure, homodimer.

Its subcellular location is the cytoplasm. It is found in the nucleoid. In terms of biological role, binds to DNA and alters its conformation. May be involved in regulation of gene expression, nucleoid organization and DNA protection. This Rickettsia bellii (strain RML369-C) protein is Nucleoid-associated protein RBE_0048.